The chain runs to 323 residues: MWPLVAALLLGSACCGSAQLLFNKTKSVEFTFCNDTVVIPCFVTNMEAQNTTEVYVKWKFKGRDIYTFDGALNKSTVPTDFSSAKIEVSQLLKGDASLKMDKSDAVSHTGNYTCEVTELTREGETIIELKYRVVSWFSPNENILIVIFPIFAILLFWGQFGIKTLKYRSGGMDEKTIALLVAGLVITVIVIVGAILFVPGEYSLKNATGLGLIVTSTGILILLHYYVFSTAIGLTSFVIAILVIQVIAYILAVVGLSLCIAACIPMHGPLLISGLSILALAQLLGLVYMKFVASNQKTIQPPRKAVEEPLNAFKESKGMMNDE.

An N-terminal signal peptide occupies residues 1 to 18; sequence MWPLVAALLLGSACCGSA. Gln-19 carries the pyrrolidone carboxylic acid modification. The Ig-like V-type domain occupies 19 to 127; sequence QLLFNKTKSV…ELTREGETII (109 aa). Residues 19–141 lie on the Extracellular side of the membrane; it reads QLLFNKTKSV…RVVSWFSPNE (123 aa). 4 N-linked (GlcNAc...) asparagine glycosylation sites follow: Asn-23, Asn-34, Asn-50, and Asn-73. Cystine bridges form between Cys-33/Cys-263 and Cys-41/Cys-114. Ser-89 carries the phosphoserine modification. A glycan (N-linked (GlcNAc...) asparagine) is linked at Asn-111. A helical membrane pass occupies residues 142-162; it reads NILIVIFPIFAILLFWGQFGI. Residues 163–176 lie on the Cytoplasmic side of the membrane; the sequence is KTLKYRSGGMDEKT. A helical transmembrane segment spans residues 177–197; the sequence is IALLVAGLVITVIVIVGAILF. Residues 198 to 207 are Extracellular-facing; that stretch reads VPGEYSLKNA. N-linked (GlcNAc...) asparagine glycosylation occurs at Asn-206. A helical transmembrane segment spans residues 208-228; that stretch reads TGLGLIVTSTGILILLHYYVF. Topologically, residues 229-235 are cytoplasmic; sequence STAIGLT. The chain crosses the membrane as a helical span at residues 236–256; it reads SFVIAILVIQVIAYILAVVGL. The Extracellular portion of the chain corresponds to 257 to 268; it reads SLCIAACIPMHG. Residues 269–289 form a helical membrane-spanning segment; sequence PLLISGLSILALAQLLGLVYM. Over 290–323 the chain is Cytoplasmic; sequence KFVASNQKTIQPPRKAVEEPLNAFKESKGMMNDE.

Monomer. Interacts with THBS1 (via the C-terminal domain). Interacts with SIRPA. Interacts with FAS/CD95; interaction may be enhanced by functional activation. Interacts with SIRPG, UBQLN1 and UBQLN2. May interact with fibrinogen. Interacts with Aedes aegypti neutrophil-stimulating factor 1; the interaction results in inhibition of phagocytosis activity of macrophages. Very broadly distributed on normal adult tissues, as well as ovarian tumors, being especially abundant in some epithelia and the brain. Macrophages.

The protein localises to the cell membrane. Functionally, adhesive protein that mediates cell-to-cell interactions. Acts as a receptor for thrombospondin THBS1 and as modulator of integrin signaling through the activation of heterotrimeric G proteins. Involved in signal transduction, cardiovascular homeostasis, inflammation, apoptosis, angiogenesis, cellular self-renewal, and immunoregulation. Plays a role in modulating pulmonary endothelin EDN1 signaling. Modulates nitrous oxide (NO) signaling, in response to THBS1, hence playing a role as a pressor agent, supporting blood pressure. Plays an important role in memory formation and synaptic plasticity in the hippocampus. Receptor for SIRPA, binding to which prevents maturation of immature dendritic cells and inhibits cytokine production by mature dendritic cells. Interaction with SIRPG mediates cell-cell adhesion, enhances superantigen-dependent T-cell-mediated proliferation and costimulates T-cell activation. Positively modulates FAS-dependent apoptosis in T-cells, perhaps by enhancing FAS clustering. Plays a role in suppressing angiogenesis and may be involved in metabolic dysregulation during normal aging. In response to THBS1, negatively modulates wound healing. Inhibits stem cell self-renewal, in response to THBS1, probably by regulation of the stem cell transcription factors POU5F1/OCT4, SOX2, MYC/c-Myc and KLF4. May play a role in membrane transport and/or integrin dependent signal transduction. May prevent premature elimination of red blood cells. This chain is Leukocyte surface antigen CD47 (CD47), found in Homo sapiens (Human).